The sequence spans 160 residues: Cytochrome b6-f complex subunit 4 (160 aa).

A run of 3 helical transmembrane segments spans residues 36 to 56 (LLYL…GLAV), 95 to 115 (LLGV…PFIE), and 131 to 151 (LVFI…CLPI).

It belongs to the cytochrome b family. PetD subfamily. As to quaternary structure, the 4 large subunits of the cytochrome b6-f complex are cytochrome b6, subunit IV (17 kDa polypeptide, petD), cytochrome f and the Rieske protein, while the 4 small subunits are petG, petL, petM and petN. The complex functions as a dimer.

It localises to the plastid. The protein localises to the chloroplast thylakoid membrane. In terms of biological role, component of the cytochrome b6-f complex, which mediates electron transfer between photosystem II (PSII) and photosystem I (PSI), cyclic electron flow around PSI, and state transitions. The chain is Cytochrome b6-f complex subunit 4 from Thalassiosira pseudonana (Marine diatom).